Here is a 39-residue protein sequence, read N- to C-terminus: Photosystem II reaction center protein L (39 aa).

A helical transmembrane segment spans residues 18–38 (SLYLGLLLVFVTGVLFSSYFF).

Belongs to the PsbL family. In terms of assembly, PSII is composed of 1 copy each of membrane proteins PsbA, PsbB, PsbC, PsbD, PsbE, PsbF, PsbH, PsbI, PsbJ, PsbK, PsbL, PsbM, PsbT, PsbX, PsbY, PsbZ, Psb30/Ycf12, at least 3 peripheral proteins of the oxygen-evolving complex and a large number of cofactors. It forms dimeric complexes.

Its subcellular location is the plastid. The protein resides in the organellar chromatophore thylakoid membrane. Functionally, one of the components of the core complex of photosystem II (PSII). PSII is a light-driven water:plastoquinone oxidoreductase that uses light energy to abstract electrons from H(2)O, generating O(2) and a proton gradient subsequently used for ATP formation. It consists of a core antenna complex that captures photons, and an electron transfer chain that converts photonic excitation into a charge separation. This subunit is found at the monomer-monomer interface and is required for correct PSII assembly and/or dimerization. The sequence is that of Photosystem II reaction center protein L from Paulinella chromatophora.